The following is a 255-amino-acid chain: Snake venom serine protease HS112 (255 aa).

An N-terminal signal peptide occupies residues 1–18 (MVLIRVIANLLILQLSYA). Positions 19–24 (QKSSEL) are excised as a propeptide. The 222-residue stretch at 25-246 (VIGGDECDIN…YLPWIQSIIA (222 aa)) folds into the Peptidase S1 domain. 6 disulfide bridges follow: Cys31/Cys162, Cys49/Cys65, Cys97/Cys253, Cys141/Cys207, Cys173/Cys186, and Cys197/Cys222. Residues His64 and Asp109 each act as charge relay system in the active site. The N-linked (GlcNAc...) asparagine glycan is linked to Asn169. The Charge relay system role is filled by Ser201. Asn248 carries N-linked (GlcNAc...) asparagine glycosylation.

This sequence belongs to the peptidase S1 family. Snake venom subfamily. In terms of assembly, monomer. Expressed by the venom gland.

It is found in the secreted. Its function is as follows. Snake venom serine protease that may act in the hemostasis system of the prey. The polypeptide is Snake venom serine protease HS112 (Bothrops jararaca (Jararaca)).